Consider the following 412-residue polypeptide: Major facilitator superfamily domain-containing protein 3 (412 aa).

12 consecutive transmembrane segments (helical) span residues 10-30 (GLYL…PVLL), 40-60 (VGLA…APLV), 73-93 (STAG…PGAG), 94-114 (QAGL…GAAM), 138-158 (VQVV…LALL), 166-186 (LFLL…AAPA), 209-229 (VLAV…KLGE), 250-270 (LGLW…SLGG), 291-311 (LGGL…GASM), 321-341 (ALLS…VTFT), 361-381 (LLAT…GGLA), and 384-404 (LGPH…VLYL).

It belongs to the major facilitator superfamily.

Its subcellular location is the membrane. The chain is Major facilitator superfamily domain-containing protein 3 (MFSD3) from Homo sapiens (Human).